The chain runs to 176 residues: 3-hydroxydecanoyl-[acyl-carrier-protein] dehydratase (176 aa).

Histidine 71 is a catalytic residue.

The protein belongs to the thioester dehydratase family. FabA subfamily. As to quaternary structure, homodimer.

The protein resides in the cytoplasm. The catalysed reaction is a (3R)-hydroxyacyl-[ACP] = a (2E)-enoyl-[ACP] + H2O. The enzyme catalyses (3R)-hydroxydecanoyl-[ACP] = (2E)-decenoyl-[ACP] + H2O. It carries out the reaction (2E)-decenoyl-[ACP] = (3Z)-decenoyl-[ACP]. It functions in the pathway lipid metabolism; fatty acid biosynthesis. In terms of biological role, necessary for the introduction of cis unsaturation into fatty acids. Catalyzes the dehydration of (3R)-3-hydroxydecanoyl-ACP to E-(2)-decenoyl-ACP and then its isomerization to Z-(3)-decenoyl-ACP. Can catalyze the dehydratase reaction for beta-hydroxyacyl-ACPs with saturated chain lengths up to 16:0, being most active on intermediate chain length. The sequence is that of 3-hydroxydecanoyl-[acyl-carrier-protein] dehydratase from Afipia carboxidovorans (strain ATCC 49405 / DSM 1227 / KCTC 32145 / OM5) (Oligotropha carboxidovorans).